The following is a 477-amino-acid chain: Diphthine methyltransferase (477 aa).

3 WD repeats span residues 194 to 232, 236 to 276, and 422 to 464; these read HFEA…TPVF, RHCM…QPLA, and VKTR…ARTL.

This sequence belongs to the DPH7 family. In terms of assembly, interacts with INCA1.

The enzyme catalyses diphthine methyl ester-[translation elongation factor 2] + H2O = diphthine-[translation elongation factor 2] + methanol + H(+). Its pathway is protein modification; peptidyl-diphthamide biosynthesis. Functionally, catalyzes the demethylation of diphthine methyl ester to form diphthine, an intermediate diphthamide biosynthesis, a post-translational modification of histidine which occurs in translation elongation factor 2 (EEF2). The polypeptide is Diphthine methyltransferase (Dph7) (Mus musculus (Mouse)).